The following is a 191-amino-acid chain: uncharacterized protein (191 aa).

The HTH tetR-type domain occupies 5-65 (GDSREKILHT…IEAVTYTGKI (61 aa)). The H-T-H motif DNA-binding region spans 28-47 (GLNQIVKESGAPKGSLYHFF).

This is an uncharacterized protein from Bacillus subtilis (strain 168).